Here is a 225-residue protein sequence, read N- to C-terminus: NAD(P)H-quinone oxidoreductase subunit K, chloroplastic (225 aa).

Residues C43, C44, C108, and C139 each coordinate [4Fe-4S] cluster.

The protein belongs to the complex I 20 kDa subunit family. As to quaternary structure, NDH is composed of at least 16 different subunits, 5 of which are encoded in the nucleus. [4Fe-4S] cluster serves as cofactor.

The protein resides in the plastid. It is found in the chloroplast thylakoid membrane. It carries out the reaction a plastoquinone + NADH + (n+1) H(+)(in) = a plastoquinol + NAD(+) + n H(+)(out). The enzyme catalyses a plastoquinone + NADPH + (n+1) H(+)(in) = a plastoquinol + NADP(+) + n H(+)(out). In terms of biological role, NDH shuttles electrons from NAD(P)H:plastoquinone, via FMN and iron-sulfur (Fe-S) centers, to quinones in the photosynthetic chain and possibly in a chloroplast respiratory chain. The immediate electron acceptor for the enzyme in this species is believed to be plastoquinone. Couples the redox reaction to proton translocation, and thus conserves the redox energy in a proton gradient. In Populus trichocarpa (Western balsam poplar), this protein is NAD(P)H-quinone oxidoreductase subunit K, chloroplastic.